The chain runs to 320 residues: Aminoacyl tRNA synthase complex-interacting multifunctional protein 2 (320 aa).

Serine 36 carries the post-translational modification Phosphoserine. The tract at residues 82 to 162 is interaction with PRKN; that stretch reads TPDADLDVTN…HTHSAVRSVP (81 aa). An interaction with TP53 region spans residues 162–225; it reads PANLLQCFGE…FLFSLFGQKQ (64 aa). Positions 220–317 constitute a GST C-terminal domain; sequence LFGQKQDAVN…NLAPFHTALK (98 aa).

As to quaternary structure, part of the multisynthetase complex (MSC), a multisubunit complex that groups tRNA ligases for Arg (RARS1), Asp (DARS1), Gln (QARS1), Ile (IARS1), Leu (LARS1), Lys (KARS1), Met (MARS1) the bifunctional ligase for Glu and Pro (EPRS1) and the auxiliary subunits AIMP1/p43, AIMP2/p38 and EEF1E1/p18. Interacts (via N-terminus) with KARS1. Interacts with EPRS1. Forms a linear complex that contains MARS1, EEF1E1, EPRS1 and AIMP2 that is at the core of the multisubunit complex. Binds FUBP1 (via C-terminus). Interacts in both its unphosphorylated and phosphorylated forms with p53/TP53 (via N-terminus) in the nucleus following UV irradiation. Interacts (via N-terminus) with PRKN/parkin (via first RING-type domain). Interacts with TARS3. Post-translationally, phosphorylated on serine residues in response to UV irradiation. Ubiquitinated by PRKN, leading to its degradation by the proteasome.

The protein localises to the cytoplasm. The protein resides in the cytosol. It is found in the nucleus. In terms of biological role, required for assembly and stability of the aminoacyl-tRNA synthase complex. Mediates ubiquitination and degradation of FUBP1, a transcriptional activator of MYC, leading to MYC down-regulation which is required for aveolar type II cell differentiation. Blocks MDM2-mediated ubiquitination and degradation of p53/TP53. Functions as a proapoptotic factor. This chain is Aminoacyl tRNA synthase complex-interacting multifunctional protein 2 (AIMP2), found in Bos taurus (Bovine).